A 479-amino-acid chain; its full sequence is Ribosomal lysine N-methyltransferase 2 (479 aa).

Residues 22-325 form the SET domain; the sequence is PNISICESPE…INEELFLNYG (304 aa). Tyrosine 324 serves as a coordination point for S-adenosyl-L-methionine.

This sequence belongs to the class V-like SAM-binding methyltransferase superfamily. RKM2 family.

Functionally, S-adenosyl-L-methionine-dependent protein-lysine N-methyltransferase that trimethylates 60S ribosomal protein L12 (RPL12A and RPL12B) at 'Lys-4' and 'Lys-11'. The chain is Ribosomal lysine N-methyltransferase 2 from Saccharomyces cerevisiae (strain ATCC 204508 / S288c) (Baker's yeast).